A 2624-amino-acid chain; its full sequence is Transcription factor TFIIIB component B'' homolog (2624 aa).

A disordered region spans residues 1-142 (MFRRARLSVK…TKEKQPCSDR (142 aa)). The interval 1–299 (MFRRARLSVK…TYSSFRKNYY (299 aa)) is interaction with ZBTB43. Residues 63 to 77 (PQEKAPRSSTEKTGG) are compositionally biased toward basic and acidic residues. The segment covering 99 to 119 (SSTSSLVKSSVSVPSESHPLS) has biased composition (low complexity). Positions 120 to 132 (TINQEAPQPTATS) are enriched in polar residues. Over residues 133 to 142 (TKEKQPCSDR) the composition is skewed to basic and acidic residues. The stretch at 144 to 177 (RIYKAQKLREMLKEELRKEKKQWKNKYAINESQR) forms a coiled coil. Positions 193 to 241 (LPDNNPMTSSLEQEKKTEKPSTPVQTREQEGKSTPNAEDNEMEEETDDG) are disordered. Positions 212-229 (PSTPVQTREQEGKSTPNA) are enriched in polar residues. Residues 230–240 (EDNEMEEETDD) are compositionally biased toward acidic residues. The Myb-like domain maps to 295–345 (RKNYYSKPWSNKETDMFFLAISMVGTDFSMIGQLFPHRARIEIKNKFKREE). A required for phosphorylation by CSNK2A1 region spans residues 355–470 (AFQEKRPFDF…QKKRRRKKQD (116 aa)). Disordered stretches follow at residues 379 to 449 (EKRK…SRED), 544 to 567 (LSLS…TSDL), 606 to 663 (ENVK…MNTL), and 729 to 759 (EEIG…SRKD). Over residues 397–407 (TKPRKNVKVKK) the composition is skewed to basic residues. A compositionally biased stretch (low complexity) spans 552–565 (ATSVATESSESSTS). Composition is skewed to basic and acidic residues over residues 637–663 (TESE…MNTL) and 736–759 (EKNE…SRKD). A 1; approximate repeat occupies 823-877 (GRREISSKEEVLEKILVSGEMAAALRETVRLDTSPKEMVPAEINTKEMQSDLKET). Residues 823-1327 (GRREISSKEE…PRENELEETS (505 aa)) are 9 X 55 AA repeats of G-R-R-X-I-S-P-X-E-N-G-X-E-E-V-K-P-X-X-E-M-E-T-D-L-K-X-T-G-R-E-X-X-X-R-E-K-T-X-E-X-X-D-A-X-E-E-I-D-X-D-L-E-E-T. Repeat copies occupy residues 878 to 932 (GRRA…LEEA), 933 to 987 (GRRE…LEET), 988 to 1040 (GRRK…LEET), 1041 to 1094 (EREV…LEET), 1095 to 1148 (EREI…LEET), and 1149 to 1203 (GRRE…LEET). Threonine 915 is modified (phosphothreonine). Composition is skewed to basic and acidic residues over residues 930–957 (EEAG…ETDL) and 979–1006 (EIDK…KPVD). The segment at 930–1222 (EEAGRREISP…GPEEVKPVGK (293 aa)) is disordered. Residues 1030-1041 (DATEEIDLEETE) are compositionally biased toward acidic residues. The span at 1052-1079 (EEVKPLGEMETDLKATGRDSFPRGKTPE) shows a compositional bias: basic and acidic residues. Residues 1078–1103 (PEVIDAIEEIEIDLEETEREISPQEN) are a coiled coil. Residues 1082–1095 (DAIEEIEIDLEETE) are compositionally biased toward acidic residues. Residues 1120 to 1133 (ATGREISPREKTPE) show a composition bias toward basic and acidic residues. A compositionally biased stretch (acidic residues) spans 1136–1145 (DATEEIDKDL). Residues 1161–1190 (EEVKPVDEMETDLKTTGREGSSREKTREVI) show a composition bias toward basic and acidic residues. Acidic residues predominate over residues 1194-1204 (EVIETDLEETE). Residues 1204-1257 (EREISPQENGPEEVKPVGKMETDLKEIREEISQREKVLAEFSAIREKEIDLKET) form an 8; approximate repeat. The stretch at 1223-1284 (METDLKEIRE…VEEMEADLKE (62 aa)) forms a coiled coil. A 9; approximate repeat occupies 1258–1327 (GKRDIPIMEK…PRENELEETS (70 aa)). A compositionally biased stretch (basic and acidic residues) spans 1306-1321 (AELKQTGKTDISPREN). Disordered stretches follow at residues 1306-1348 (AELK…SAVP), 1365-1440 (TPVE…RFKR), 1519-1543 (TERN…VQKN), 1684-1722 (KAKP…LQKG), 1819-1863 (STSE…ASKA), 2130-2164 (GAEM…ENKD), 2181-2200 (SEVN…QEVH), 2207-2241 (VASS…GDSV), 2444-2501 (FQSR…SRPG), and 2519-2566 (SDEP…PSPS). Residues 1326–1344 (TSTSRQTDTHLMQSGSNDF) show a composition bias toward polar residues. Over residues 1366 to 1378 (PVEEKRNSEKEVS) the composition is skewed to basic and acidic residues. Polar residues-rich tracts occupy residues 1379–1390 (SHFSHFKISSQT), 1411–1421 (SDINLSKSLPQ), and 1519–1529 (TERNLSPSNSC). A compositionally biased stretch (basic and acidic residues) spans 1695-1719 (KKEEPVLEKVTTDQSKEGKPEDHLL). A compositionally biased stretch (basic residues) spans 1844 to 1853 (RGSKRVRGKT). Basic and acidic residues predominate over residues 2131-2151 (AEMETQRETEKNASKATELEN). A compositionally biased stretch (basic and acidic residues) spans 2470–2479 (VSDKEERTDA). Positions 2488 to 2498 (SRTSSSKASLS) are enriched in low complexity. Residues 2526–2544 (HSKKRLKPLIPGLRKKLKR) show a composition bias toward basic residues.

In terms of assembly, component of TFIIIB complex. The TFIIIB complex has two activities, alpha and beta. The TFIIIB-alpha and TFIIIB-beta activities are required for transcription of genes with TFIIIC-bound internal promoters and PSE transcription factor-bound external promoters, respectively. The TFIIIB-alpha activity complex is composed of TBP, BDP1, and a complex containing both BRF2 and at least four stably associated proteins; YY1 facilitates the formation of TFIIIB-alpha activity complex. The TFIIIB-beta activity complex is composed of TBP, BDP1, and BRF1. Interacts with BRF1; this interaction diminishes during mitosis resulting in the release of BDP1 from chromosomal templates. Component of TFIIIC complex. The TFIIIC complex has two activities, C1 and C2. The TFIIIC2 activity complex is only required for transcription of the 'classical' pol III genes whereas the TFIIIC1 activity complex is required for transcription of all pol III genes. The TFIIIC1 activity complex is composed at least of BDP1. Interacts with ZBTB43. Post-translationally, phosphorylated by CSNK2A1 during mitosis, resulting in its release from chromatin and suppression of polymerase III transcription. As to expression, isoform 2 is highly expressed in cerebellum.

The protein resides in the nucleus. General activator of RNA polymerase III transcription. Requires for transcription from all three types of polymerase III promoters. Requires for transcription of genes with internal promoter elements and with promoter elements upstream of the initiation site. The chain is Transcription factor TFIIIB component B'' homolog (BDP1) from Homo sapiens (Human).